The following is a 640-amino-acid chain: 1-deoxy-D-xylulose-5-phosphate synthase (640 aa).

Thiamine diphosphate is bound by residues His77 and 118–120 (AHA). Residue Asp149 participates in Mg(2+) binding. Thiamine diphosphate is bound by residues 150 to 151 (GS), Asn178, Tyr287, and Glu369. Asn178 contacts Mg(2+).

Belongs to the transketolase family. DXPS subfamily. As to quaternary structure, homodimer. It depends on Mg(2+) as a cofactor. The cofactor is thiamine diphosphate.

It carries out the reaction D-glyceraldehyde 3-phosphate + pyruvate + H(+) = 1-deoxy-D-xylulose 5-phosphate + CO2. It participates in metabolic intermediate biosynthesis; 1-deoxy-D-xylulose 5-phosphate biosynthesis; 1-deoxy-D-xylulose 5-phosphate from D-glyceraldehyde 3-phosphate and pyruvate: step 1/1. Functionally, catalyzes the acyloin condensation reaction between C atoms 2 and 3 of pyruvate and glyceraldehyde 3-phosphate to yield 1-deoxy-D-xylulose-5-phosphate (DXP). The polypeptide is 1-deoxy-D-xylulose-5-phosphate synthase (Caulobacter vibrioides (strain NA1000 / CB15N) (Caulobacter crescentus)).